We begin with the raw amino-acid sequence, 109 residues long: U16-hexatoxin-Hi1a (109 aa).

Positions 1–16 are cleaved as a signal peptide; sequence LTGHLCCMMIWWQATQ. Positions 17–43 are excised as a propeptide; that stretch reads VISPPLPVIREENNSHKMGVSLFPLKR.

Post-translationally, contains 2 disulfide bonds. As to expression, expressed by the venom gland.

The protein localises to the secreted. Probable ion channel inhibitor. The protein is U16-hexatoxin-Hi1a of Hadronyche infensa (Fraser island funnel-web spider).